The following is a 479-amino-acid chain: V-type ATP synthase beta chain (479 aa).

Residues 458 to 479 are disordered; sequence EGDSEREAPKMDSPHEEISEKS.

This sequence belongs to the ATPase alpha/beta chains family.

Produces ATP from ADP in the presence of a proton gradient across the membrane. The V-type beta chain is a regulatory subunit. This chain is V-type ATP synthase beta chain, found in Nitrosococcus oceani (strain ATCC 19707 / BCRC 17464 / JCM 30415 / NCIMB 11848 / C-107).